The primary structure comprises 268 residues: UPF0719 transmembrane protein aq_1349 (268 aa).

8 helical membrane-spanning segments follow: residues 5–24 (LIALFWVIFSKYVFDVLFFR), 37–59 (NLALSLSYAGYFLGLAFSFYSVY), 69–91 (LYLIFVSFTLLLGVYIFDLIFLR), 104–126 (AGAGITQGIYFLSLGILISASFW), 130–152 (SFILSVIYSLIYLSLGMVMLFIS), 173–195 (FSASLVLGSITLGVSVVLYGAIS), 210–232 (VLYFVVSQVLMVIFYVVVEFLLF), and 245–267 (NLSASLILSATFIASAFITLAVM).

The protein belongs to the UPF0719 family.

Its subcellular location is the cell membrane. This Aquifex aeolicus (strain VF5) protein is UPF0719 transmembrane protein aq_1349.